A 333-amino-acid chain; its full sequence is MRPKVFITRAIPENGIEMLKEHFEVEVWPEEREIPREVLLKKVRDVDALVTMLSERIDSEVFDAAPRLRIVANYAVGYDNIDVEEATRRGIYVTNTPDVLTDATADFAWTLLLATARRLIEADHFTRSGEWKRRGIAWHPRWFLGYDVYGKTIGIVGFGRIGQAVARRARGFGMRILYYSRSRKPEAEKELGAEFRSLEDLLRESDFVVLAVPLTKETQYMINEERLRLMKKTAILVNIARGKVVDTKALMKALKEGWIAGAGLDVYEEEPYYNEELFSLKNVVLAPHIGSATYGAREGMAELVARNLIAFKNGEVPPTLVNKEVVKVRKPGF.

Residues 158 to 161 (FGRI), 180 to 182 (SRS), and 239 to 241 (IAR) contribute to the NADP(+) site. Residues Arg241 and Glu270 contribute to the active site. His288 functions as the Proton donor in the catalytic mechanism. Position 288–290 (288–290 (HIG)) interacts with NADP(+).

The protein belongs to the D-isomer specific 2-hydroxyacid dehydrogenase family. GyaR subfamily. As to quaternary structure, homodimer.

The protein resides in the cytoplasm. The catalysed reaction is glycolate + NAD(+) = glyoxylate + NADH + H(+). This is Glyoxylate reductase from Thermococcus kodakarensis (strain ATCC BAA-918 / JCM 12380 / KOD1) (Pyrococcus kodakaraensis (strain KOD1)).